Here is a 205-residue protein sequence, read N- to C-terminus: Helix-loop-helix protein 4 (205 aa).

Positions 3–16 (MVVAKRNARERTRV) are basic motif. The region spanning 3–56 (MVVAKRNARERTRVHTVNQAFLVLKQHLPSLRQFTKRVSKLRILNAAITYIDTL) is the bHLH domain. Residues 17–56 (HTVNQAFLVLKQHLPSLRQFTKRVSKLRILNAAITYIDTL) are helix-loop-helix motif.

In terms of tissue distribution, expressed in the ADL sensory neurons.

Its subcellular location is the nucleus. In terms of biological role, acts as a transcriptional regulator. May mediate transcriptional activation by binding to the E-box motif 5'-CANNTG-3'. Required for the correct morphology, terminal identity and function of the ADL sensory neurons by controlling the expression of the ADL-specific gene repertoire, including chemoreceptor encoding genes, ion channel encoding genes, neuropeptides and the neurotransmitter eat-4. Regulates the expression of the srh-234 chemoreceptor encoding gene in the ADL neurons under feeding conditions. Plays a role in the chemorepulsive response toward ascaroside pheromones mediated by the ADL sensory neurons. The chain is Helix-loop-helix protein 4 (hlh-4) from Caenorhabditis elegans.